A 301-amino-acid chain; its full sequence is GTPase Era (301 aa).

An Era-type G domain is found at 4–173 (KAGFVALIGK…LECISEHLSP (170 aa)). Residues 12–19 (GKPNAGKS) are G1. 12–19 (GKPNAGKS) lines the GTP pocket. A G2 region spans residues 38 to 42 (NATRK). Residues 64 to 67 (DTPG) form a G3 region. Residues 64–68 (DTPGL) and 122–125 (SKID) each bind GTP. The segment at 122-125 (SKID) is G4. Residues 152–154 (LSA) form a G5 region. Positions 204-280 (LSDEIPYESD…FLNLQVIAQK (77 aa)) constitute a KH type-2 domain.

It belongs to the TRAFAC class TrmE-Era-EngA-EngB-Septin-like GTPase superfamily. Era GTPase family. Monomer.

Its subcellular location is the cytoplasm. It is found in the cell inner membrane. Functionally, an essential GTPase that binds both GDP and GTP, with rapid nucleotide exchange. Plays a role in 16S rRNA processing and 30S ribosomal subunit biogenesis and possibly also in cell cycle regulation and energy metabolism. The polypeptide is GTPase Era (Helicobacter acinonychis (strain Sheeba)).